The primary structure comprises 83 residues: Mu-theraphotoxin-Hhn2p (83 aa).

A signal peptide spans 1 to 21 (MKASMYLALAGLVLLFVVGYA). The propeptide occupies 22–48 (SESEEKEFPRELLSKIFAVDDFKGEER). Cystine bridges form between cysteine 50–cysteine 65, cysteine 57–cysteine 70, and cysteine 64–cysteine 77. Leucine 81 bears the Leucine amide mark.

Belongs to the neurotoxin 10 (Hwtx-1) family. 15 (Hntx-3) subfamily. As to quaternary structure, monomer. As to expression, expressed by the venom gland.

The protein localises to the secreted. Its function is as follows. Lethal neurotoxin. Selectively blocks tetrodotoxin-sensitive voltage-gated sodium channels (Nav). Does not affect tetrodotoxin-resistant voltage-gated sodium channels or calcium channels. In Cyriopagopus hainanus (Chinese bird spider), this protein is Mu-theraphotoxin-Hhn2p.